A 1083-amino-acid chain; its full sequence is UPF0182 protein BAD_0641 (1083 aa).

A disordered region spans residues M1–P72. The next 7 helical transmembrane spans lie at I78–Q98, L125–I145, I178–W198, S239–I259, I281–F301, V325–M345, and V372–L392. Residues D976 to W1061 are disordered. Basic and acidic residues-rich tracts occupy residues T991–Q1013 and K1050–D1060.

Belongs to the UPF0182 family.

The protein localises to the cell membrane. The chain is UPF0182 protein BAD_0641 from Bifidobacterium adolescentis (strain ATCC 15703 / DSM 20083 / NCTC 11814 / E194a).